The primary structure comprises 442 residues: Trigger factor (442 aa).

One can recognise a PPIase FKBP-type domain in the interval 162 to 247 (GDRMTFDFEG…VKAIESRELP (86 aa)).

It belongs to the FKBP-type PPIase family. Tig subfamily.

It is found in the cytoplasm. It catalyses the reaction [protein]-peptidylproline (omega=180) = [protein]-peptidylproline (omega=0). Functionally, involved in protein export. Acts as a chaperone by maintaining the newly synthesized protein in an open conformation. Functions as a peptidyl-prolyl cis-trans isomerase. In Magnetococcus marinus (strain ATCC BAA-1437 / JCM 17883 / MC-1), this protein is Trigger factor.